Here is a 187-residue protein sequence, read N- to C-terminus: Elongation factor P (187 aa).

It belongs to the elongation factor P family.

It localises to the cytoplasm. The protein operates within protein biosynthesis; polypeptide chain elongation. Functionally, involved in peptide bond synthesis. Stimulates efficient translation and peptide-bond synthesis on native or reconstituted 70S ribosomes in vitro. Probably functions indirectly by altering the affinity of the ribosome for aminoacyl-tRNA, thus increasing their reactivity as acceptors for peptidyl transferase. The sequence is that of Elongation factor P from Ruegeria pomeroyi (strain ATCC 700808 / DSM 15171 / DSS-3) (Silicibacter pomeroyi).